A 244-amino-acid chain; its full sequence is Phosphoadenosine 5'-phosphosulfate reductase (244 aa).

Catalysis depends on cysteine 239, which acts as the Nucleophile; cysteine thiosulfonate intermediate.

Belongs to the PAPS reductase family. CysH subfamily.

It is found in the cytoplasm. The enzyme catalyses [thioredoxin]-disulfide + sulfite + adenosine 3',5'-bisphosphate + 2 H(+) = [thioredoxin]-dithiol + 3'-phosphoadenylyl sulfate. Its pathway is sulfur metabolism; hydrogen sulfide biosynthesis; sulfite from sulfate: step 3/3. Catalyzes the formation of sulfite from phosphoadenosine 5'-phosphosulfate (PAPS) using thioredoxin as an electron donor. This Klebsiella pneumoniae (strain 342) protein is Phosphoadenosine 5'-phosphosulfate reductase.